The sequence spans 316 residues: Putative phosphoribosylaminoimidazole-succinocarboxamide synthase 2 (316 aa).

This sequence belongs to the SAICAR synthetase family.

It carries out the reaction 5-amino-1-(5-phospho-D-ribosyl)imidazole-4-carboxylate + L-aspartate + ATP = (2S)-2-[5-amino-1-(5-phospho-beta-D-ribosyl)imidazole-4-carboxamido]succinate + ADP + phosphate + 2 H(+). The protein operates within purine metabolism; IMP biosynthesis via de novo pathway; 5-amino-1-(5-phospho-D-ribosyl)imidazole-4-carboxamide from 5-amino-1-(5-phospho-D-ribosyl)imidazole-4-carboxylate: step 1/2. In Agrobacterium fabrum (strain C58 / ATCC 33970) (Agrobacterium tumefaciens (strain C58)), this protein is Putative phosphoribosylaminoimidazole-succinocarboxamide synthase 2 (purC2).